Reading from the N-terminus, the 388-residue chain is MVSVSEIRQAQRAEGPATILAIGTATPPNCVDQSTYPDYYFRITNSEHMTDLKEKFQRMCDKSMIKKRYMHVTEEILKENPSMCAYMAPSLDARQDIVVVEVPRLGKEAAVKAIKEWGQPKSKITHLIFCTTSGVDMPGADYQLTKLLGLRPYVKRYMMYQQGCFAGGTVLRLAKDLAENNKGARVLVVCSEITAVTFRGPSDTHLDSLVGQALFGDGAAAVIVGSDPIPQIEKPLFELVWTAQTIAPDSEGAIDGHLREVGLTFHLLKDVPGIVSKNIGKALSEAFDPLNISDYNSIFWIAHPGGPAILDQVAQKLGLKPEKMKATRDVLSDYGNMSSACVTFHLDEIEKSVENGLKTTGKDLEWGVLFGFGPGLSLETVVLHSVAI.

Residue Cys164 is part of the active site.

The protein belongs to the thiolase-like superfamily. Chalcone/stilbene synthases family.

It catalyses the reaction (E)-4-coumaroyl-CoA + 3 malonyl-CoA + 3 H(+) = 2',4,4',6'-tetrahydroxychalcone + 3 CO2 + 4 CoA. It participates in secondary metabolite biosynthesis; flavonoid biosynthesis. Its function is as follows. The primary product of this enzyme is 4,2',4',6'-tetrahydroxychalcone (also termed naringenin-chalcone or chalcone) which can under specific conditions spontaneously isomerize into naringenin. The chain is Chalcone synthase (CHS) from Vigna unguiculata (Cowpea).